Consider the following 875-residue polypeptide: Phosphoenolpyruvate carboxylase (875 aa).

Residues His137 and Lys542 contribute to the active site.

The protein belongs to the PEPCase type 1 family. It depends on Mg(2+) as a cofactor.

It carries out the reaction oxaloacetate + phosphate = phosphoenolpyruvate + hydrogencarbonate. Forms oxaloacetate, a four-carbon dicarboxylic acid source for the tricarboxylic acid cycle. The protein is Phosphoenolpyruvate carboxylase of Pseudomonas putida (strain GB-1).